The chain runs to 1171 residues: Myosin-B/C (1171 aa).

The Myosin motor domain maps to 105–780; the sequence is ETVDDIGYLP…AAKELSILQR (676 aa). 199-206 is an ATP binding site; that stretch reads GESGAGKT. Positions 671–681 are actin-binding; the sequence is AHFIRCLKPNE. The interval 810–1171 is tail; it reads IHFLTRLESN…CFEACAPDRP (362 aa).

The protein belongs to the TRAFAC class myosin-kinesin ATPase superfamily. Myosin family.

It is found in the cytoplasm. In terms of biological role, myosins are actin-based motor molecules with ATPase activity. Unconventional myosins serve in intracellular movements. Their highly divergent tails are presumed to bind to membranous compartments, which would be moved relative to actin filaments. Plays a role in proper daughter cell budding and separation. This chain is Myosin-B/C, found in Toxoplasma gondii.